The sequence spans 391 residues: FLUCTUATING-LIGHT-ACCLIMATION protein 1, chloroplastic (391 aa).

The transit peptide at 1–48 (MASSSTFLELTPFQWNQPLPYTQRPHHRTVLLYSKPQRRSNSIRLQIS) directs the protein to the chloroplast. A helical transmembrane segment spans residues 87 to 107 (AIAAVLLGLLLFYDPNSALAA). A compositionally biased stretch (low complexity) spans 116–138 (SFSSRSRSSSSSSSQSYSVPRTS). Residues 116–140 (SFSSRSRSSSSSSSQSYSVPRTSNP) form a disordered region. Helical transmembrane passes span 168 to 188 (FGFG…AFVL) and 321 to 341 (YIVV…PING).

It belongs to the FLAP family.

Its subcellular location is the plastid. It localises to the chloroplast thylakoid membrane. The protein localises to the chloroplast membrane. It is found in the chloroplast envelope. Monitors proton H(+) homeostasis in chloroplasts to manipulate luminal acidification levels appropriately to balance photoprotection and photochemical processes. Required during acclimation response to fluctuating light (e.g. photosynthetic activity optimization) by controlling non-photochemical quenching (NPQ); acts independently from DLDG1. This is FLUCTUATING-LIGHT-ACCLIMATION protein 1, chloroplastic from Arabidopsis thaliana (Mouse-ear cress).